The following is a 361-amino-acid chain: 3-dehydroquinate synthase (361 aa).

Residues 72–77, 130–131, K142, and K151 contribute to the NAD(+) site; these read SGEKEK and TT. Zn(2+) is bound by residues E184, H247, and H264.

Belongs to the sugar phosphate cyclases superfamily. Dehydroquinate synthase family. The cofactor is Co(2+). Zn(2+) is required as a cofactor. Requires NAD(+) as cofactor.

The protein localises to the cytoplasm. The enzyme catalyses 7-phospho-2-dehydro-3-deoxy-D-arabino-heptonate = 3-dehydroquinate + phosphate. It functions in the pathway metabolic intermediate biosynthesis; chorismate biosynthesis; chorismate from D-erythrose 4-phosphate and phosphoenolpyruvate: step 2/7. Functionally, catalyzes the conversion of 3-deoxy-D-arabino-heptulosonate 7-phosphate (DAHP) to dehydroquinate (DHQ). The chain is 3-dehydroquinate synthase from Bacillus cereus (strain ZK / E33L).